Here is a 104-residue protein sequence, read N- to C-terminus: Large ribosomal subunit protein bL21 (104 aa).

It belongs to the bacterial ribosomal protein bL21 family. As to quaternary structure, part of the 50S ribosomal subunit. Contacts protein L20.

Its function is as follows. This protein binds to 23S rRNA in the presence of protein L20. The polypeptide is Large ribosomal subunit protein bL21 (Helicobacter pylori (strain HPAG1)).